We begin with the raw amino-acid sequence, 126 residues long: Aspartate 1-decarboxylase (126 aa).

The active-site Schiff-base intermediate with substrate; via pyruvic acid is serine 25. Serine 25 is modified (pyruvic acid (Ser)). Threonine 57 provides a ligand contact to substrate. Tyrosine 58 serves as the catalytic Proton donor. Glycine 73–alanine 75 contacts substrate.

This sequence belongs to the PanD family. In terms of assembly, heterooctamer of four alpha and four beta subunits. Requires pyruvate as cofactor. In terms of processing, is synthesized initially as an inactive proenzyme, which is activated by self-cleavage at a specific serine bond to produce a beta-subunit with a hydroxyl group at its C-terminus and an alpha-subunit with a pyruvoyl group at its N-terminus.

It is found in the cytoplasm. The catalysed reaction is L-aspartate + H(+) = beta-alanine + CO2. It functions in the pathway cofactor biosynthesis; (R)-pantothenate biosynthesis; beta-alanine from L-aspartate: step 1/1. Catalyzes the pyruvoyl-dependent decarboxylation of aspartate to produce beta-alanine. The chain is Aspartate 1-decarboxylase from Cronobacter sakazakii (strain ATCC BAA-894) (Enterobacter sakazakii).